Reading from the N-terminus, the 149-residue chain is Probable flagellum biosynthesis repressor protein FlbT (149 aa).

This sequence belongs to the FlbT family.

Its function is as follows. Has a post-transcriptional repressor function in flagellum biogenesis. Associates with the 5'-UTR of fljK mRNA and promotes its degradation. This is Probable flagellum biosynthesis repressor protein FlbT from Rhizobium etli (strain ATCC 51251 / DSM 11541 / JCM 21823 / NBRC 15573 / CFN 42).